The sequence spans 322 residues: tRNA-dihydrouridine(16) synthase (322 aa).

FMN is bound by residues 7–9 (PME) and Q68. C98 functions as the Proton donor in the catalytic mechanism. FMN is bound by residues K139, 200-202 (NGE), and 224-225 (CR).

It belongs to the Dus family. DusC subfamily. FMN is required as a cofactor.

It carries out the reaction 5,6-dihydrouridine(16) in tRNA + NADP(+) = uridine(16) in tRNA + NADPH + H(+). The enzyme catalyses 5,6-dihydrouridine(16) in tRNA + NAD(+) = uridine(16) in tRNA + NADH + H(+). Functionally, catalyzes the synthesis of 5,6-dihydrouridine (D), a modified base found in the D-loop of most tRNAs, via the reduction of the C5-C6 double bond in target uridines. Specifically modifies U16 in tRNAs. The polypeptide is tRNA-dihydrouridine(16) synthase (Vibrio parahaemolyticus serotype O3:K6 (strain RIMD 2210633)).